Consider the following 1025-residue polypeptide: Kinesin-like protein KIN-14P (1025 aa).

2 disordered regions span residues M1–G87 and Y263–E286. A compositionally biased stretch (low complexity) spans S15 to S28. The segment covering V29–T41 has biased composition (basic and acidic residues). The span at P42–S53 shows a compositional bias: low complexity. Residues K65–Q75 are compositionally biased toward polar residues. Residues H203 to N425 are a coiled coil. Over residues T270–E286 the composition is skewed to basic and acidic residues. The 330-residue stretch at N509–V838 folds into the Kinesin motor domain. G593–T600 contributes to the ATP binding site. Residues K847–Q879 are a coiled coil. 3 disordered regions span residues Q881–A926, A939–D977, and T994–A1025. 2 stretches are compositionally biased toward polar residues: residues S901–S913 and A939–I948. Residues V950–K962 are compositionally biased toward basic and acidic residues. 2 stretches are compositionally biased toward low complexity: residues S963–R974 and S998–S1016.

It belongs to the TRAFAC class myosin-kinesin ATPase superfamily. Kinesin family. KIN-14 subfamily.

The sequence is that of Kinesin-like protein KIN-14P from Arabidopsis thaliana (Mouse-ear cress).